The chain runs to 446 residues: tRNA modification GTPase MnmE (446 aa).

Residues Arg-24, Glu-81, and Lys-120 each coordinate (6S)-5-formyl-5,6,7,8-tetrahydrofolate. The TrmE-type G domain maps to 216–368 (GLHAVLIGPP…LHTRLRELAL (153 aa)). Residue Asn-226 coordinates K(+). GTP is bound by residues 226 to 231 (NAGKSS), 245 to 251 (TDVAGTT), and 270 to 273 (DTAG). Residue Ser-230 participates in Mg(2+) binding. Residues Thr-245, Val-247, and Thr-250 each coordinate K(+). Thr-251 is a binding site for Mg(2+). Lys-446 is a binding site for (6S)-5-formyl-5,6,7,8-tetrahydrofolate.

The protein belongs to the TRAFAC class TrmE-Era-EngA-EngB-Septin-like GTPase superfamily. TrmE GTPase family. In terms of assembly, homodimer. Heterotetramer of two MnmE and two MnmG subunits. Requires K(+) as cofactor.

Its subcellular location is the cytoplasm. Exhibits a very high intrinsic GTPase hydrolysis rate. Involved in the addition of a carboxymethylaminomethyl (cmnm) group at the wobble position (U34) of certain tRNAs, forming tRNA-cmnm(5)s(2)U34. The chain is tRNA modification GTPase MnmE from Xanthomonas campestris pv. campestris (strain 8004).